The following is a 778-amino-acid chain: Hyperosmolality-gated Ca2+ permeable channel 1.4 (778 aa).

The next 10 helical transmembrane spans lie at 7 to 27 (IGLAAAINILSALIFLLLFAI), 101 to 121 (IYLIGLKIFGPIALLSWSILV), 158 to 178 (FWAHLVMAYAFTFWTCYVLMK), 375 to 395 (FVMHIAFFFLTFFFIIPIAFV), 427 to 447 (FLPGIVLKLFLIFLPTILMIM), 467 to 487 (YYIFNLVNVFLGSVITGSAFE), 512 to 532 (ATFFITYIMVDGWAGVAGEIF), 584 to 604 (PVTPVLLPFIIFFFGFAYLVF), 626 to 646 (VHGRIISALIISQILLLGLMS), and 651 to 671 (VQSTPFLLVLAILTFGFHRFC). Residues 738 to 778 (VVQTKRQRSRRTTVASSNASRGSSQSTPFNQLDLGKGKPET) are disordered. Positions 753–763 (SSNASRGSSQS) are enriched in low complexity.

Belongs to the CSC1 (TC 1.A.17) family.

The protein localises to the membrane. In terms of biological role, acts as an osmosensitive calcium-permeable cation channel. This chain is Hyperosmolality-gated Ca2+ permeable channel 1.4, found in Arabidopsis thaliana (Mouse-ear cress).